A 396-amino-acid polypeptide reads, in one-letter code: 1-deoxy-D-xylulose 5-phosphate reductoisomerase (396 aa).

NADPH is bound by residues Thr-15, Gly-16, Ser-17, Ile-18, Gly-41, and Asn-129. Lys-130 contributes to the 1-deoxy-D-xylulose 5-phosphate binding site. Glu-131 is an NADPH binding site. Asp-155 is a Mn(2+) binding site. Residues Ser-156, Glu-157, Ser-182, and His-205 each contribute to the 1-deoxy-D-xylulose 5-phosphate site. Glu-157 contacts Mn(2+). Gly-211 contacts NADPH. 1-deoxy-D-xylulose 5-phosphate-binding residues include Ser-218, Asn-223, Lys-224, and Glu-227. Mn(2+) is bound at residue Glu-227.

It belongs to the DXR family. Mg(2+) is required as a cofactor. Mn(2+) serves as cofactor.

It catalyses the reaction 2-C-methyl-D-erythritol 4-phosphate + NADP(+) = 1-deoxy-D-xylulose 5-phosphate + NADPH + H(+). The protein operates within isoprenoid biosynthesis; isopentenyl diphosphate biosynthesis via DXP pathway; isopentenyl diphosphate from 1-deoxy-D-xylulose 5-phosphate: step 1/6. In terms of biological role, catalyzes the NADPH-dependent rearrangement and reduction of 1-deoxy-D-xylulose-5-phosphate (DXP) to 2-C-methyl-D-erythritol 4-phosphate (MEP). The sequence is that of 1-deoxy-D-xylulose 5-phosphate reductoisomerase from Xanthomonas axonopodis pv. citri (strain 306).